The chain runs to 95 residues: Aspartyl/glutamyl-tRNA(Asn/Gln) amidotransferase subunit C (95 aa).

Belongs to the GatC family. As to quaternary structure, heterotrimer of A, B and C subunits.

It catalyses the reaction L-glutamyl-tRNA(Gln) + L-glutamine + ATP + H2O = L-glutaminyl-tRNA(Gln) + L-glutamate + ADP + phosphate + H(+). The catalysed reaction is L-aspartyl-tRNA(Asn) + L-glutamine + ATP + H2O = L-asparaginyl-tRNA(Asn) + L-glutamate + ADP + phosphate + 2 H(+). Allows the formation of correctly charged Asn-tRNA(Asn) or Gln-tRNA(Gln) through the transamidation of misacylated Asp-tRNA(Asn) or Glu-tRNA(Gln) in organisms which lack either or both of asparaginyl-tRNA or glutaminyl-tRNA synthetases. The reaction takes place in the presence of glutamine and ATP through an activated phospho-Asp-tRNA(Asn) or phospho-Glu-tRNA(Gln). This chain is Aspartyl/glutamyl-tRNA(Asn/Gln) amidotransferase subunit C, found in Pelodictyon phaeoclathratiforme (strain DSM 5477 / BU-1).